The chain runs to 71 residues: Small ribosomal subunit protein bS18c (71 aa).

Belongs to the bacterial ribosomal protein bS18 family. Part of the 30S ribosomal subunit.

Its subcellular location is the plastid. It is found in the chloroplast. The polypeptide is Small ribosomal subunit protein bS18c (rps18) (Mesostigma viride (Green alga)).